Here is a 667-residue protein sequence, read N- to C-terminus: WD repeat-containing protein 48 homolog (667 aa).

WD repeat units follow at residues 26-65 (QHRN…NEKY), 71-110 (HHND…CMST), 113-152 (THRD…ALTA), 164-203 (GSKD…RSMK), 206-245 (GHTE…CVQT), 248-287 (VHKE…NKML), 290-329 (EEQA…RCTL), and 350-389 (KGGA…KKEQ). The interval 591-615 (ETTPSGGNANNSLQNSQSDANSEGS) is disordered.

This sequence belongs to the WD repeat WDR48 family. Catalytic component of the Usp12-46 deubiquitylase complex consisting of Usp12-46, Wdr20 and Uaf1; regulatory subunit that, together wtih Wdr20, stabilizes Usp12-46. The Usp12-46 deubiquitylase complex associates with arr/arrow; the interaction leads to deubiquitination and stabilization of arr/arrow.

Regulatory component of the Usp12-46 deubiquitylase complex. activates deubiquitination by increasing the catalytic turnover without increasing the affinity of deubiquitinating enzymes for the substrate. The complex deubiquitylates the wg/wingless-signaling receptor arr/arrow, which stabilizes the receptor and increases its concentration at the cell surface; this enhances the sensitivity of cells to wg/wingless-signal stimulation. This increases the amplitude and spatial range of the signaling response to the wg/wingless morphogen gradient, facilitating the precise concentration-dependent regulation of its target genes. Together with Wdr20 and Usp12-46 required for wg/wingless-mediated signaling in the wing imaginal disc and for wg/wingless-dependent regulation of intestinal stem cell proliferation. In Drosophila ananassae (Fruit fly), this protein is WD repeat-containing protein 48 homolog.